The primary structure comprises 69 residues: Conotoxin Eb6.19 (69 aa).

A signal peptide spans 1–17 (VLIIAVLFLTACQLTTA). Positions 18-41 (ETYSRGRQKHRARRSTDKNSKWTR) are excised as a propeptide. Intrachain disulfides connect C43–C57, C50–C61, and C56–C68.

This sequence belongs to the conotoxin O1 superfamily. Expressed by the venom duct.

It is found in the secreted. In Conus ebraeus (Hebrew cone), this protein is Conotoxin Eb6.19 (E1).